The primary structure comprises 501 residues: uncharacterized protein (501 aa).

Belongs to the UbiD family.

This is an uncharacterized protein from Synechocystis sp. (strain ATCC 27184 / PCC 6803 / Kazusa).